A 314-amino-acid polypeptide reads, in one-letter code: Aspartate carbamoyltransferase catalytic subunit (314 aa).

Carbamoyl phosphate is bound by residues Arg-55 and Thr-56. Position 83 (Lys-83) interacts with L-aspartate. Carbamoyl phosphate-binding residues include Arg-105, His-139, and Gln-142. L-aspartate is bound by residues Arg-172 and Arg-226. Carbamoyl phosphate-binding residues include Gly-267 and Pro-268.

It belongs to the aspartate/ornithine carbamoyltransferase superfamily. ATCase family. As to quaternary structure, heterododecamer (2C3:3R2) of six catalytic PyrB chains organized as two trimers (C3), and six regulatory PyrI chains organized as three dimers (R2).

It carries out the reaction carbamoyl phosphate + L-aspartate = N-carbamoyl-L-aspartate + phosphate + H(+). It functions in the pathway pyrimidine metabolism; UMP biosynthesis via de novo pathway; (S)-dihydroorotate from bicarbonate: step 2/3. In terms of biological role, catalyzes the condensation of carbamoyl phosphate and aspartate to form carbamoyl aspartate and inorganic phosphate, the committed step in the de novo pyrimidine nucleotide biosynthesis pathway. The chain is Aspartate carbamoyltransferase catalytic subunit from Rhodococcus jostii (strain RHA1).